The chain runs to 274 residues: Copper chaperone for superoxide dismutase (274 aa).

In terms of domain architecture, HMA spans 11-74; it reads LCTLEFAVQM…LLEGTGRQAV (64 aa). Cysteine 22 and cysteine 25 together coordinate Cu cation. Lysine 76 participates in a covalent cross-link: Glycyl lysine isopeptide (Lys-Gly) (interchain with G-Cter in ubiquitin). The interval 88 to 234 is superoxide dismutase-like; the sequence is AAVAILGGPG…LACGIIARSA (147 aa). A disulfide bridge links cysteine 141 with cysteine 227. Positions 147, 155, 164, and 167 each coordinate Zn(2+). Glycyl lysine isopeptide (Lys-Gly) (interchain with G-Cter in ubiquitin) cross-links involve residues lysine 189, lysine 216, and lysine 241. 2 residues coordinate Cu cation: cysteine 244 and cysteine 246. Position 267 is a phosphoserine (serine 267).

In the C-terminal section; belongs to the Cu-Zn superoxide dismutase family. Homodimer, and heterodimer with SOD1. Interacts with COMMD1. Interacts with XIAP/BIRC4. Interacts with SLC31A1(via C-terminal domain); this interaction is Cu(1+)-mediated. The heterodimer CCS:SOD1 interacts with SLC31A1; this heterotrimer is Cu(1+)-mediated and its maintenance is regulated through SOD1 activation. It depends on Cu(2+) as a cofactor. The cofactor is Zn(2+). In terms of processing, ubiquitinion by XIAP/BIRC4 leads to enhancement of its chaperone activity toward its physiologic target, SOD1, rather than proteasomal degradation. XIAP/BIRC4 preferentially ubiquitinates at Lys-241. In terms of tissue distribution, ubiquitous.

It is found in the cytoplasm. In terms of biological role, delivers copper to copper zinc superoxide dismutase (SOD1). This chain is Copper chaperone for superoxide dismutase, found in Homo sapiens (Human).